Here is a 380-residue protein sequence, read N- to C-terminus: Tubulin-like protein CetZ (380 aa).

Residues 10-14 (QCGTK), 103-105 (GTG), E136, N163, and N181 each bind GTP. Positions 359–380 (PSLEATGSDDPEGFAEYREVSR) are disordered.

This sequence belongs to the CetZ family.

The protein localises to the cytoplasm. Its function is as follows. Involved in cell shape control. This chain is Tubulin-like protein CetZ, found in Thermococcus kodakarensis (strain ATCC BAA-918 / JCM 12380 / KOD1) (Pyrococcus kodakaraensis (strain KOD1)).